The following is a 96-amino-acid chain: Small ribosomal subunit protein bS6 (96 aa).

Belongs to the bacterial ribosomal protein bS6 family.

In terms of biological role, binds together with bS18 to 16S ribosomal RNA. The sequence is that of Small ribosomal subunit protein bS6 from Streptococcus thermophilus (strain ATCC BAA-250 / LMG 18311).